A 129-amino-acid polypeptide reads, in one-letter code: Glycine cleavage system H protein (129 aa).

A Lipoyl-binding domain is found at 24-106 (IATIGITEFA…YGEGWFLKVR (83 aa)). Residue Lys-65 is modified to N6-lipoyllysine.

The protein belongs to the GcvH family. In terms of assembly, the glycine cleavage system is composed of four proteins: P, T, L and H. It depends on (R)-lipoate as a cofactor.

Functionally, the glycine cleavage system catalyzes the degradation of glycine. The H protein shuttles the methylamine group of glycine from the P protein to the T protein. This is Glycine cleavage system H protein from Nostoc punctiforme (strain ATCC 29133 / PCC 73102).